A 102-amino-acid chain; its full sequence is NADH-quinone oxidoreductase subunit K (102 aa).

A run of 3 helical transmembrane segments spans residues 6-26 (LEHG…GLMV), 30-50 (ILFV…AFVV), and 62-82 (VMFI…LAIL).

It belongs to the complex I subunit 4L family. As to quaternary structure, NDH-1 is composed of 13 different subunits. Subunits NuoA, H, J, K, L, M, N constitute the membrane sector of the complex.

The protein localises to the cell inner membrane. It catalyses the reaction a quinone + NADH + 5 H(+)(in) = a quinol + NAD(+) + 4 H(+)(out). Its function is as follows. NDH-1 shuttles electrons from NADH, via FMN and iron-sulfur (Fe-S) centers, to quinones in the respiratory chain. The immediate electron acceptor for the enzyme in this species is believed to be ubiquinone. Couples the redox reaction to proton translocation (for every two electrons transferred, four hydrogen ions are translocated across the cytoplasmic membrane), and thus conserves the redox energy in a proton gradient. The polypeptide is NADH-quinone oxidoreductase subunit K (Pseudomonas syringae pv. syringae (strain B728a)).